Reading from the N-terminus, the 247-residue chain is tRNA pseudouridine synthase A (247 aa).

Catalysis depends on Asp-52, which acts as the Nucleophile. Tyr-113 provides a ligand contact to substrate.

The protein belongs to the tRNA pseudouridine synthase TruA family. Homodimer.

The enzyme catalyses uridine(38/39/40) in tRNA = pseudouridine(38/39/40) in tRNA. Functionally, formation of pseudouridine at positions 38, 39 and 40 in the anticodon stem and loop of transfer RNAs. This chain is tRNA pseudouridine synthase A, found in Bartonella tribocorum (strain CIP 105476 / IBS 506).